The sequence spans 222 residues: MTQQNTTLMPREKLLKYGASSLDDKELLAIFLRTGIKNCPVMQLSELVLAHFSSLRGLINADQKHFCQMKGLGITQFVQLQACTEMTKRYLLQELQFAQEFTSPDTVRMYLQTELENKDREIFMVLFLDNQHRLIKKEEMFLGTINQANVYPREIIKTALFCNAAALILAHNHPSGVSTPSMADRKMTENIKQLSELMEIRVLDHFIIGKGNYFSFAEQGWI.

The MPN domain occupies 99–222 (QEFTSPDTVR…YFSFAEQGWI (124 aa)). Zn(2+) is bound by residues His171, His173, and Asp184. The JAMM motif motif lies at 171-184 (HNHPSGVSTPSMAD).

This sequence belongs to the UPF0758 family.

This chain is UPF0758 protein HSM_0009, found in Histophilus somni (strain 2336) (Haemophilus somnus).